Consider the following 151-residue polypeptide: 6,7-dimethyl-8-ribityllumazine synthase (151 aa).

Residues Phe23, 55-57 (AYE), and 79-81 (AVI) contribute to the 5-amino-6-(D-ribitylamino)uracil site. A (2S)-2-hydroxy-3-oxobutyl phosphate-binding site is contributed by 84–85 (AT). His87 functions as the Proton donor in the catalytic mechanism. Phe111 provides a ligand contact to 5-amino-6-(D-ribitylamino)uracil. Arg125 is a binding site for (2S)-2-hydroxy-3-oxobutyl phosphate.

It belongs to the DMRL synthase family.

The enzyme catalyses (2S)-2-hydroxy-3-oxobutyl phosphate + 5-amino-6-(D-ribitylamino)uracil = 6,7-dimethyl-8-(1-D-ribityl)lumazine + phosphate + 2 H2O + H(+). It participates in cofactor biosynthesis; riboflavin biosynthesis; riboflavin from 2-hydroxy-3-oxobutyl phosphate and 5-amino-6-(D-ribitylamino)uracil: step 1/2. In terms of biological role, catalyzes the formation of 6,7-dimethyl-8-ribityllumazine by condensation of 5-amino-6-(D-ribitylamino)uracil with 3,4-dihydroxy-2-butanone 4-phosphate. This is the penultimate step in the biosynthesis of riboflavin. The polypeptide is 6,7-dimethyl-8-ribityllumazine synthase (Leptospira interrogans serogroup Icterohaemorrhagiae serovar Lai (strain 56601)).